The primary structure comprises 864 residues: Leucine--tRNA ligase (864 aa).

Residues proline 42 to histidine 52 carry the 'HIGH' region motif. Residues lysine 619–serine 623 carry the 'KMSKS' region motif. Lysine 622 is a binding site for ATP.

Belongs to the class-I aminoacyl-tRNA synthetase family.

It is found in the cytoplasm. It catalyses the reaction tRNA(Leu) + L-leucine + ATP = L-leucyl-tRNA(Leu) + AMP + diphosphate. In Wigglesworthia glossinidia brevipalpis, this protein is Leucine--tRNA ligase.